Reading from the N-terminus, the 340-residue chain is Glutaminyl-peptide cyclotransferase (340 aa).

An N-terminal signal peptide occupies residues 1-23 (MAIGSVVFAAAGLLLLLLPPSHQ). A glycan (N-linked (GlcNAc...) asparagine) is linked at Asn-42. Arg-85 and Glu-91 together coordinate alpha-D-mannopyranose. Cys-113 and Cys-136 are oxidised to a cystine. Residue Asp-131 participates in Zn(2+) binding. Positions 151 and 155 each coordinate alpha-D-mannopyranose. An N-linked (GlcNAc...) asparagine glycan is attached at Asn-156. Catalysis depends on Glu-170, which acts as the Proton acceptor. Glu-171 is a binding site for Zn(2+). Asp-218 serves as the catalytic Proton acceptor. His-297 provides a ligand contact to Zn(2+). Leu-306 contacts alpha-D-mannopyranose.

This sequence belongs to the glutaminyl-peptide cyclotransferase family.

The protein resides in the secreted. It carries out the reaction N-terminal L-glutaminyl-[peptide] = N-terminal 5-oxo-L-prolyl-[peptide] + NH4(+). Its activity is regulated as follows. Inhibited by imidazoles (imidazole, benzimidazole, 1-benzylimidazole, 1-methylimidazole, P150/03, N-omega-acetylhistamine and 4-methylimidazole) and cysteamines (cysteamine, N-dimethylcysteamine and N-diethylcysteamine). Partially inhibited by PDB50 1(3,4-dimethoxyphenyl)-3-(3-imidazol-1-ylpropyl)thiourea. Its function is as follows. Acts as a glutaminyl-peptide cyclotransferase. Responsible for the biosynthesis of pyroglutamyl peptides. Might be more efficient in the conversion of tri and tetrapeptides in vitro. Might have a relative preference for substrates containing hydrophobic amino acids in vitro. This Drosophila melanogaster (Fruit fly) protein is Glutaminyl-peptide cyclotransferase.